A 267-amino-acid polypeptide reads, in one-letter code: Diphthine synthase (267 aa).

Residues Leu-9, Asp-85, Val-88, Ser-113 to Ile-114, Leu-170, Ala-211, and His-236 each bind S-adenosyl-L-methionine.

Belongs to the diphthine synthase family. Homodimer.

It catalyses the reaction 2-[(3S)-amino-3-carboxypropyl]-L-histidyl-[translation elongation factor 2] + 3 S-adenosyl-L-methionine = diphthine-[translation elongation factor 2] + 3 S-adenosyl-L-homocysteine + 3 H(+). It functions in the pathway protein modification; peptidyl-diphthamide biosynthesis. Its function is as follows. S-adenosyl-L-methionine-dependent methyltransferase that catalyzes the trimethylation of the amino group of the modified target histidine residue in translation elongation factor 2 (EF-2), to form an intermediate called diphthine. The three successive methylation reactions represent the second step of diphthamide biosynthesis. This chain is Diphthine synthase, found in Methanococcoides burtonii (strain DSM 6242 / NBRC 107633 / OCM 468 / ACE-M).